The chain runs to 96 residues: Co-chaperonin GroES 2 (96 aa).

It belongs to the GroES chaperonin family. Heptamer of 7 subunits arranged in a ring. Interacts with the chaperonin GroEL.

It is found in the cytoplasm. Its function is as follows. Together with the chaperonin GroEL, plays an essential role in assisting protein folding. The GroEL-GroES system forms a nano-cage that allows encapsulation of the non-native substrate proteins and provides a physical environment optimized to promote and accelerate protein folding. GroES binds to the apical surface of the GroEL ring, thereby capping the opening of the GroEL channel. This Vibrio vulnificus (strain CMCP6) protein is Co-chaperonin GroES 2.